The sequence spans 141 residues: Large ribosomal subunit protein uL11 (141 aa).

It belongs to the universal ribosomal protein uL11 family. Part of the ribosomal stalk of the 50S ribosomal subunit. Interacts with L10 and the large rRNA to form the base of the stalk. L10 forms an elongated spine to which L12 dimers bind in a sequential fashion forming a multimeric L10(L12)X complex. One or more lysine residues are methylated.

Its function is as follows. Forms part of the ribosomal stalk which helps the ribosome interact with GTP-bound translation factors. The protein is Large ribosomal subunit protein uL11 of Synechococcus sp. (strain WH7803).